The primary structure comprises 330 residues: DNA primase small subunit PriS (330 aa).

Catalysis depends on residues Asp-101 and Asp-103. Zn(2+) contacts are provided by Cys-116, Cys-119, Cys-128, and Asp-131. Asp-235 is an active-site residue.

The protein belongs to the eukaryotic-type primase small subunit family. Heterodimer of a small subunit (PriS) and a large subunit (PriL). Mg(2+) serves as cofactor. The cofactor is Mn(2+).

Catalytic subunit of DNA primase, an RNA polymerase that catalyzes the synthesis of short RNA molecules used as primers for DNA polymerase during DNA replication. The small subunit contains the primase catalytic core and has DNA synthesis activity on its own. Binding to the large subunit stabilizes and modulates the activity, increasing the rate of DNA synthesis while decreasing the length of the DNA fragments, and conferring RNA synthesis capability. The DNA polymerase activity may enable DNA primase to also catalyze primer extension after primer synthesis. May also play a role in DNA repair. Possesses a template-independent 3'-terminal nucleotidyl transferase activity. This Saccharolobus solfataricus (strain ATCC 35092 / DSM 1617 / JCM 11322 / P2) (Sulfolobus solfataricus) protein is DNA primase small subunit PriS.